The chain runs to 421 residues: Expansin-like protein DDB_G0293186 (421 aa).

An N-terminal signal peptide occupies residues 1 to 20 (MRTLKLIILLILSTFKTINS). Asn19 carries an N-linked (GlcNAc...) asparagine glycan. The Expansin-like EG45 domain maps to 43–139 (GGQCGLPLPG…QKVSCGFSGY (97 aa)). 2 disulfide bridges follow: Cys46-Cys70 and Cys73-Cys134. Asn117 and Asn391 each carry an N-linked (GlcNAc...) asparagine glycan.

This sequence belongs to the expansin family. Expansin A subfamily.

It localises to the secreted. Functionally, may serve to lubricate the movement of the cellulose microfibrils during cell growth and wall extension and/or may serve to maintain the fluid state of the slug cell wall. This is Expansin-like protein DDB_G0293186 from Dictyostelium discoideum (Social amoeba).